Reading from the N-terminus, the 351-residue chain is Histidinol-phosphate aminotransferase (351 aa).

Residue lysine 221 is modified to N6-(pyridoxal phosphate)lysine.

It belongs to the class-II pyridoxal-phosphate-dependent aminotransferase family. Histidinol-phosphate aminotransferase subfamily. As to quaternary structure, homodimer. The cofactor is pyridoxal 5'-phosphate.

The catalysed reaction is L-histidinol phosphate + 2-oxoglutarate = 3-(imidazol-4-yl)-2-oxopropyl phosphate + L-glutamate. It participates in amino-acid biosynthesis; L-histidine biosynthesis; L-histidine from 5-phospho-alpha-D-ribose 1-diphosphate: step 7/9. In Staphylococcus haemolyticus (strain JCSC1435), this protein is Histidinol-phosphate aminotransferase.